The chain runs to 577 residues: Sulfite reductase [NADPH] hemoprotein beta-component (577 aa).

[4Fe-4S] cluster-binding residues include Cys-436, Cys-442, Cys-481, and Cys-485. Cys-485 contacts siroheme.

The protein belongs to the nitrite and sulfite reductase 4Fe-4S domain family. In terms of assembly, alpha(8)-beta(8). The alpha component is a flavoprotein, the beta component is a hemoprotein. The cofactor is siroheme. Requires [4Fe-4S] cluster as cofactor.

The enzyme catalyses hydrogen sulfide + 3 NADP(+) + 3 H2O = sulfite + 3 NADPH + 4 H(+). The protein operates within sulfur metabolism; hydrogen sulfide biosynthesis; hydrogen sulfide from sulfite (NADPH route): step 1/1. Functionally, component of the sulfite reductase complex that catalyzes the 6-electron reduction of sulfite to sulfide. This is one of several activities required for the biosynthesis of L-cysteine from sulfate. This Shewanella woodyi (strain ATCC 51908 / MS32) protein is Sulfite reductase [NADPH] hemoprotein beta-component.